The following is a 623-amino-acid chain: Scarecrow-like protein 22 (623 aa).

Disordered regions lie at residues 62–90 (RSPSPFVSSSTTTLSSSHGGPSGGGAAAA) and 179–203 (PNPGFFSDPPSSPPAKRLNSGQPGS). Over residues 63-80 (SPSPFVSSSTTTLSSSHG) the composition is skewed to low complexity. In terms of domain architecture, GRAS spans 235–622 (NDQDQSAVII…KELVTVSAWK (388 aa)). Positions 242-311 (VIIDQLFSAA…ALHSLLQDSS (70 aa)) are leucine repeat I (LRI). Residues 330 to 398 (YRAFSETSPF…SSAPSLKITA (69 aa)) are VHIID. A VHIID motif is present at residues 361–365 (IHIVD). The tract at residues 413 to 448 (FTEENLRSFAGETGVSFEIELLNMEILLNPTYWPLS) is leucine repeat II (LRII). The PFYRE stretch occupies residues 458–545 (IAVNLPISSM…RFCVQPSIQK (88 aa)). Residues 548-622 (TNRYRWMERS…KELVTVSAWK (75 aa)) are SAW.

The protein belongs to the GRAS family. Expressed in seedlings, roots, leaves and flowers.

It is found in the nucleus. In terms of biological role, probable transcription factor involved in plant development. This Arabidopsis thaliana (Mouse-ear cress) protein is Scarecrow-like protein 22 (SCL22).